The primary structure comprises 320 residues: ATP-dependent 6-phosphofructokinase (320 aa).

Gly12 is a binding site for ATP. 22-26 (RGVVR) is an ADP binding site. Residues 73–74 (RF) and 103–106 (GDGS) each bind ATP. Asp104 serves as a coordination point for Mg(2+). 126 to 128 (TID) serves as a coordination point for substrate. Catalysis depends on Asp128, which acts as the Proton acceptor. Arg155 is an ADP binding site. Substrate-binding positions include Arg163 and 170 to 172 (MGR). ADP is bound by residues 186 to 188 (GCE), Lys212, and 214 to 216 (KKH). Residues Glu223, Arg244, and 250–253 (HIQR) each bind substrate.

The protein belongs to the phosphofructokinase type A (PFKA) family. ATP-dependent PFK group I subfamily. Prokaryotic clade 'B1' sub-subfamily. In terms of assembly, homotetramer. The cofactor is Mg(2+).

It localises to the cytoplasm. It catalyses the reaction beta-D-fructose 6-phosphate + ATP = beta-D-fructose 1,6-bisphosphate + ADP + H(+). Its pathway is carbohydrate degradation; glycolysis; D-glyceraldehyde 3-phosphate and glycerone phosphate from D-glucose: step 3/4. Allosterically activated by ADP and other diphosphonucleosides, and allosterically inhibited by phosphoenolpyruvate. Catalyzes the phosphorylation of D-fructose 6-phosphate to fructose 1,6-bisphosphate by ATP, the first committing step of glycolysis. This is ATP-dependent 6-phosphofructokinase from Aliivibrio salmonicida (strain LFI1238) (Vibrio salmonicida (strain LFI1238)).